We begin with the raw amino-acid sequence, 189 residues long: Elongation factor P-like protein (189 aa).

This sequence belongs to the elongation factor P family.

The chain is Elongation factor P-like protein from Vibrio atlanticus (strain LGP32) (Vibrio splendidus (strain Mel32)).